A 157-amino-acid polypeptide reads, in one-letter code: Cyclic pyranopterin monophosphate synthase (157 aa).

Residues 74 to 76 (MCH) and 112 to 113 (ME) each bind substrate. D127 is a catalytic residue.

It belongs to the MoaC family. Homohexamer; trimer of dimers.

It catalyses the reaction (8S)-3',8-cyclo-7,8-dihydroguanosine 5'-triphosphate = cyclic pyranopterin phosphate + diphosphate. It functions in the pathway cofactor biosynthesis; molybdopterin biosynthesis. Functionally, catalyzes the conversion of (8S)-3',8-cyclo-7,8-dihydroguanosine 5'-triphosphate to cyclic pyranopterin monophosphate (cPMP). The protein is Cyclic pyranopterin monophosphate synthase of Campylobacter jejuni subsp. jejuni serotype O:23/36 (strain 81-176).